The sequence spans 525 residues: BTB/POZ domain-containing protein At1g50280 (525 aa).

Residues Asn-5–Asp-79 enclose the BTB domain. Positions Glu-200–Asn-466 constitute an NPH3 domain.

This sequence belongs to the NPH3 family.

It participates in protein modification; protein ubiquitination. May act as a substrate-specific adapter of an E3 ubiquitin-protein ligase complex (CUL3-RBX1-BTB) which mediates the ubiquitination and subsequent proteasomal degradation of target proteins. This is BTB/POZ domain-containing protein At1g50280 from Arabidopsis thaliana (Mouse-ear cress).